The primary structure comprises 65 residues: MKILYLLFAFLFLAFLSEPGNAYKRCHIKGGHCFPKEKICIPPSSDFGKMDCPWRRKCCKKGSGK.

The signal sequence occupies residues 1–22 (MKILYLLFAFLFLAFLSEPGNA). Cystine bridges form between cysteine 26-cysteine 58, cysteine 33-cysteine 52, and cysteine 40-cysteine 59.

The protein belongs to the crotamine-myotoxin family. In terms of assembly, monomer. Expressed by the venom gland.

It localises to the secreted. In terms of biological role, cationic peptide that possesses multiple functions. It acts as a cell-penetrating peptide (CPP), and as a potent voltage-gated potassium channel (Kv) inhibitor. It exhibits antimicrobial activities, hind limb paralysis, and severe muscle necrosis by a non-enzymatic mechanism. The chain is Myotoxin-1 from Crotalus durissus terrificus (South American rattlesnake).